The primary structure comprises 1040 residues: MQVLPPGSTGGPSRLFILRPVATTLLMAAILLAGIIGYRFLPVAALPEVDYPTIQVVTLYPGASPDVMTSSVTAPLERQFGQMSGLKQMSSQSSGGASVVTLQFQLTLPLDVAEQEVQAAINAATNLLPSDLPNPPIYSKVNPADPPIMTLAVTSNAMPMTQVEDMVETRVAQKISQVSGVGLVTLAGGQRPAVRVKLNAQAIAALGLTSETVRTAITGANVNSAKGSLDGPERAVTLSANDQMQSADEYRKLIIAYQNGAPVRLGDVATVEQGAENSWLGAWANQAPAIVMNVQRQPGANIIATADSIRQMLPQLTESLPKSVKVTVLSDRTTNIRASVRDTQFELMLAIALVVMIIYLFLRNIPATIIPGVAVPLSLIGTFAVMVFLDFSINNLTLMALTIATGFVVDDAIVVIENISRYIEKGEKPLAAALKGAGEIGFTIISLTFSLIAVLIPLLFMGDIVGRLFREFAVTLAVAILISAVVSLTLTPMMCARMLSRQSLRKQNRFSRACERMFDRVIASYGRGLAKVLNHPWLTLSVAFATLLLSVMLWITIPKGFFPVQDNGIIQGTLQAPQSSSYASMAQRQRQVAERILQDPAVQSLTTFVGVDGANPTLNSARLQINLKPLDARDDRVQQVISRLQTAVATIPGVALYLQPTQDLTIDTQVSRTQYQFTLQATTLDALSHWVPKLQNALQSLPQLSEVSSDWQDRGLAAWVNVDRDSASRLGISMADVDNALYNAFGQRLISTIYTQANQYRVVLEHNTASTPGLAALETIRLTSRDGGTVPLSAIARIEQRFAPLSINHLDQFPVTTFSFNVPEGYSLGDAVQAILDTEKTLALPADITTQFQGSTLAFQAALGSTVWLIVAAVVAMYIVLGVLYESFIHPITILSTLPTAGVGALLALIIAGSELDIIAIIGIILLIGIVKKNAIMMIDFALAAEREQGMSPRDAIFQACLLRFRPILMTTLAALLGALPLMLSTGVGAELRRPLGIAMVGGLLVSQVLTLFTTPVIYLLFDRLSLYVKSRFPRHKEEA.

11 consecutive transmembrane segments (helical) span residues 15–37, 345–362, 367–389, 396–418, 438–460, 472–494, 535–557, 867–889, 909–931, 968–990, and 1000–1022; these read LFIL…GIIG, FELM…YLFL, ATII…MVFL, LTLM…VIEN, GEIG…PLLF, FAVT…TPMM, HPWL…WITI, VWLI…ESFI, LIIA…IGIV, ILMT…GVGA, and MVGG…YLLF.

This sequence belongs to the resistance-nodulation-cell division (RND) (TC 2.A.6) family. MdtB subfamily. As to quaternary structure, part of a tripartite efflux system composed of MdtA, MdtB and MdtC. MdtB forms a heteromultimer with MdtC.

It is found in the cell inner membrane. The polypeptide is Multidrug resistance protein MdtB (Salmonella typhi).